Here is a 689-residue protein sequence, read N- to C-terminus: tRNA 5-methylaminomethyl-2-thiouridine biosynthesis bifunctional protein MnmC (689 aa).

A tRNA (mnm(5)s(2)U34)-methyltransferase region spans residues 1–245 (MNQRPIQTAT…KREMLTGTLP (245 aa)). Positions 270-689 (IGGGIVSALT…RSPATQESSR (420 aa)) are FAD-dependent cmnm(5)s(2)U34 oxidoreductase.

This sequence in the N-terminal section; belongs to the methyltransferase superfamily. tRNA (mnm(5)s(2)U34)-methyltransferase family. The protein in the C-terminal section; belongs to the DAO family. Requires FAD as cofactor.

It is found in the cytoplasm. It carries out the reaction 5-aminomethyl-2-thiouridine(34) in tRNA + S-adenosyl-L-methionine = 5-methylaminomethyl-2-thiouridine(34) in tRNA + S-adenosyl-L-homocysteine + H(+). Functionally, catalyzes the last two steps in the biosynthesis of 5-methylaminomethyl-2-thiouridine (mnm(5)s(2)U) at the wobble position (U34) in tRNA. Catalyzes the FAD-dependent demodification of cmnm(5)s(2)U34 to nm(5)s(2)U34, followed by the transfer of a methyl group from S-adenosyl-L-methionine to nm(5)s(2)U34, to form mnm(5)s(2)U34. The chain is tRNA 5-methylaminomethyl-2-thiouridine biosynthesis bifunctional protein MnmC from Yersinia pestis.